Reading from the N-terminus, the 481-residue chain is Sialic acid-binding Ig-like lectin 16 (481 aa).

The N-terminal stretch at 1-16 (MLLLPLLLPVLGAGSL) is a signal peptide. At 17–434 (NKDPSYSLQV…VHCKSGPMTG (418 aa)) the chain is on the extracellular side. The region spanning 19–122 (DPSYSLQVQR…DEAWYFFRVE (104 aa)) is the Ig-like V-type domain. Disulfide bonds link C37/C174, C42/C102, C165/C216, and C259/C306. N-linked (GlcNAc...) asparagine glycosylation is found at N43 and N78. Residue R120 coordinates N-acetylneuraminate. Ig-like C2-type domains are found at residues 147–232 (PDVY…RTVR), 238–322 (LELQ…LDLS), and 327–424 (PENL…LSFS). 2 N-linked (GlcNAc...) asparagine glycosylation sites follow: N338 and N347. A disulfide bridge links C363 with C408. Residues 435–455 (VVLVAVGEVAMKILLLCLCLI) traverse the membrane as a helical segment. The Cytoplasmic portion of the chain corresponds to 456–481 (LLRVRSCRRKAARAALGMEAADAVTD).

The protein belongs to the immunoglobulin superfamily. SIGLEC (sialic acid binding Ig-like lectin) family. Expressed in bone marrow, fetal brain, fetal liver, lung and salivary gland. Detected in brain, macrophage, cancerous esophagus and lung at protein level.

Its subcellular location is the membrane. Functionally, putative adhesion molecule that mediates sialic-acid dependent binding to cells. The polypeptide is Sialic acid-binding Ig-like lectin 16 (SIGLEC16) (Homo sapiens (Human)).